Reading from the N-terminus, the 162-residue chain is MRHLVLIGFMGSGKSSLAQELGLALKLEVLDTDMIISERVGLSVREIFEELGEDNFRMFEKNLIDELKTLKTPHVISTGGGIIMHENLKGLGTTFYLKMDFETLIKRLNQKEREKRPLLNNLTQAKELFEKRQALYEKNASFIIDARGGLNNSLKQVLQFIA.

An ATP-binding site is contributed by 11-16 (GSGKSS). Ser15 lines the Mg(2+) pocket. Substrate contacts are provided by Asp33, Arg57, and Gly80. Arg116 contributes to the ATP binding site. Arg132 is a binding site for substrate.

Belongs to the shikimate kinase family. As to quaternary structure, monomer. Mg(2+) serves as cofactor.

The protein localises to the cytoplasm. The catalysed reaction is shikimate + ATP = 3-phosphoshikimate + ADP + H(+). Its pathway is metabolic intermediate biosynthesis; chorismate biosynthesis; chorismate from D-erythrose 4-phosphate and phosphoenolpyruvate: step 5/7. In terms of biological role, catalyzes the specific phosphorylation of the 3-hydroxyl group of shikimic acid using ATP as a cosubstrate. The polypeptide is Shikimate kinase (Helicobacter pylori (strain HPAG1)).